Reading from the N-terminus, the 160-residue chain is 3-hydroxyacyl-[acyl-carrier-protein] dehydratase FabZ (160 aa).

H63 is an active-site residue.

The protein belongs to the thioester dehydratase family. FabZ subfamily.

The protein resides in the cytoplasm. The enzyme catalyses a (3R)-hydroxyacyl-[ACP] = a (2E)-enoyl-[ACP] + H2O. Functionally, involved in unsaturated fatty acids biosynthesis. Catalyzes the dehydration of short chain beta-hydroxyacyl-ACPs and long chain saturated and unsaturated beta-hydroxyacyl-ACPs. In Xylella fastidiosa (strain M23), this protein is 3-hydroxyacyl-[acyl-carrier-protein] dehydratase FabZ.